Consider the following 264-residue polypeptide: Phosphonoacetaldehyde hydrolase (264 aa).

Asp-9 serves as the catalytic Nucleophile. The Mg(2+) site is built by Asp-9 and Ala-11. Lys-50 serves as the catalytic Schiff-base intermediate with substrate. A Mg(2+)-binding site is contributed by Asp-183.

Belongs to the HAD-like hydrolase superfamily. PhnX family. Homodimer. Mg(2+) is required as a cofactor.

The enzyme catalyses phosphonoacetaldehyde + H2O = acetaldehyde + phosphate + H(+). Its function is as follows. Involved in phosphonate degradation. The protein is Phosphonoacetaldehyde hydrolase (phnX) of Bacillus cereus.